Reading from the N-terminus, the 320-residue chain is Polyadenylate-binding protein-interacting protein 13 (320 aa).

The disordered stretch occupies residues 1 to 44 (MAVAENVGVKVDSSNNQNIDNNTTSLVETKPSCSDDQTPKSKSS). A compositionally biased stretch (polar residues) spans 12–44 (DSSNNQNIDNNTTSLVETKPSCSDDQTPKSKSS). A PAM2-like motif is present at residues 65 to 75 (HLNPMAKEFVP). 2 RRM domains span residues 137–212 (RTVY…MSKT) and 234–310 (KTVY…PSKT).

The polypeptide is Polyadenylate-binding protein-interacting protein 13 (CID13) (Arabidopsis thaliana (Mouse-ear cress)).